The chain runs to 718 residues: Neutral ceramidase B (718 aa).

Residues 1–20 (MINSFKKLIILISLVIILLS) form the signal peptide. N-linked (GlcNAc...) asparagine glycosylation is found at N224 and N252. S298 functions as the Nucleophile in the catalytic mechanism. N358, N378, N391, N421, N422, N577, N610, and N614 each carry an N-linked (GlcNAc...) asparagine glycan.

This sequence belongs to the neutral ceramidase family.

The protein resides in the secreted. The catalysed reaction is an N-acylsphing-4-enine + H2O = sphing-4-enine + a fatty acid. Its function is as follows. Hydrolyzes the sphingolipid ceramide into sphingosine and free fatty acid. The protein is Neutral ceramidase B (dcd2B) of Dictyostelium discoideum (Social amoeba).